Here is a 427-residue protein sequence, read N- to C-terminus: Enolase (427 aa).

Q163 contributes to the (2R)-2-phosphoglycerate binding site. The active-site Proton donor is E205. 3 residues coordinate Mg(2+): D242, E285, and D312. Positions 337, 366, 367, and 388 each coordinate (2R)-2-phosphoglycerate. Residue K337 is the Proton acceptor of the active site.

This sequence belongs to the enolase family. Requires Mg(2+) as cofactor.

Its subcellular location is the cytoplasm. The protein localises to the secreted. The protein resides in the cell surface. The enzyme catalyses (2R)-2-phosphoglycerate = phosphoenolpyruvate + H2O. Its pathway is carbohydrate degradation; glycolysis; pyruvate from D-glyceraldehyde 3-phosphate: step 4/5. Its function is as follows. Catalyzes the reversible conversion of 2-phosphoglycerate (2-PG) into phosphoenolpyruvate (PEP). It is essential for the degradation of carbohydrates via glycolysis. The chain is Enolase from Rhodopseudomonas palustris (strain HaA2).